The following is a 1304-amino-acid chain: Histone-lysine N-methyltransferase met-2 (1304 aa).

The span at 1 to 16 shows a compositional bias: polar residues; it reads MDQQEPSNNVDTSSIL. The disordered stretch occupies residues 1 to 31; the sequence is MDQQEPSNNVDTSSILSDDGMETQEQSSFVT. Residues 97-129 adopt a coiled-coil conformation; it reads NESEQEAVAAQRRVDAEKTAKDEAELKQQEEAE. In terms of domain architecture, MBD spans 834-909; sequence FHRNSPIHTP…FSFDARIDTA (76 aa). The region spanning 971 to 1049 is the Pre-SET domain; sequence SGCSCDGDCS…SCYNRVVQNN (79 aa). Residues Cys973, Cys975, Cys979, Cys985, Cys987, Cys1030, Cys1034, Cys1036, and Cys1041 each coordinate Zn(2+). The 226-residue stretch at 1052 to 1277 folds into the SET domain; the sequence is YPMHIFKTAQ…AGDELTWDYQ (226 aa). S-adenosyl-L-methionine is bound by residues 1062–1064, Asp1098, and Tyr1100; that span reads SGW. Basic and acidic residues predominate over residues 1113-1122; the sequence is EKGREDHETD. The disordered stretch occupies residues 1113-1201; that stretch reads EKGREDHETD…DSMEKDNIES (89 aa). The span at 1128-1144 shows a compositional bias: acidic residues; that stretch reads DESDYDDEEGSDGDSGD. Over residues 1152-1165 the composition is skewed to basic and acidic residues; the sequence is KRQDSSESGEETKR. Residues 1166–1178 are compositionally biased toward basic residues; it reads LTRQKRKQSKKSG. Residues 1182–1201 show a composition bias toward basic and acidic residues; that stretch reads SVEKDDTTPRDSMEKDNIES. S-adenosyl-L-methionine is bound by residues Arg1231 and 1234–1235; that span reads NH. Positions 1237, 1290, 1292, and 1297 each coordinate Zn(2+). Residues 1286–1302 enclose the Post-SET domain; it reads TQLTCHCGAENCTGRLL.

Belongs to the class V-like SAM-binding methyltransferase superfamily.

The protein localises to the nucleus. The protein resides in the chromosome. It is found in the cytoplasm. The enzyme catalyses N(6)-methyl-L-lysyl(9)-[histone H3] + S-adenosyl-L-methionine = N(6),N(6)-dimethyl-L-lysyl(9)-[histone H3] + S-adenosyl-L-homocysteine + H(+). It carries out the reaction L-lysyl(9)-[histone H3] + S-adenosyl-L-methionine = N(6)-methyl-L-lysyl(9)-[histone H3] + S-adenosyl-L-homocysteine + H(+). Functionally, histone methyltransferase which is required for the mono- and dimethylation of 'Lys-9' of histone H3. This increases the efficiency of set-25-mediated trimethylation of histone H3 'Lys-9'. Involved in the transcriptional repression of lin-3 which is required for the negative regulation of vulval cell fate specification during postembryonic development. Has a role in blocking checkpoint signaling and mediating the transcriptional silencing of meiotic sex chromosome inactivation; a mechanism which enables checkpoint proteins to distinguish between the partnerless male X chromosome and asynapsed chromosomes thereby shielding the lone X from inappropriate activation of an apoptotic program. Operates redundantly with set-25 to position chromatin at the nuclear periphery. Required for small-RNA-induced H3K9 methylation. Together with set-25, protects and stabilizes repeat-rich genomic regions by suppressing transcription-induced replication stress through methylation of H3K9. Together with spr-5, required for transgenerational fertility. The protein is Histone-lysine N-methyltransferase met-2 (met-2) of Caenorhabditis elegans.